The primary structure comprises 682 residues: Penicillin-binding protein activator LpoA (682 aa).

The signal sequence occupies residues 1-26 (MLPLNSVRTHAGRLVPVMLAALFLAG). Residue C27 is the site of N-palmitoyl cysteine attachment. Residue C27 is the site of S-diacylglycerol cysteine attachment. 2 disordered regions span residues 240–262 (AKQLPSQLGGTPPAAAAPTTGET) and 314–341 (ANNAAAATPGAPAVPSPASSTPSAVSPT). Positions 248 to 262 (GGTPPAAAAPTTGET) are enriched in low complexity.

The protein belongs to the LpoA family. As to quaternary structure, interacts with PBP1a.

Its subcellular location is the cell outer membrane. Its function is as follows. Regulator of peptidoglycan synthesis that is essential for the function of penicillin-binding protein 1A (PBP1a). This Dickeya chrysanthemi (strain Ech1591) (Dickeya zeae (strain Ech1591)) protein is Penicillin-binding protein activator LpoA.